The sequence spans 508 residues: Maturase K (508 aa).

Belongs to the intron maturase 2 family. MatK subfamily.

It is found in the plastid. It localises to the chloroplast. Functionally, usually encoded in the trnK tRNA gene intron. Probably assists in splicing its own and other chloroplast group II introns. This chain is Maturase K, found in Marathrum schiedeanum.